A 465-amino-acid polypeptide reads, in one-letter code: Cysteine--tRNA ligase (465 aa).

C27 contacts Zn(2+). Residues 29–39 (PTVYNFFHIGN) carry the 'HIGH' region motif. 3 residues coordinate Zn(2+): C207, H232, and E236. Residues 264-268 (KMSKS) carry the 'KMSKS' region motif. K267 is an ATP binding site.

Belongs to the class-I aminoacyl-tRNA synthetase family. Monomer. Zn(2+) is required as a cofactor.

It localises to the cytoplasm. The enzyme catalyses tRNA(Cys) + L-cysteine + ATP = L-cysteinyl-tRNA(Cys) + AMP + diphosphate. In Clostridium botulinum (strain Okra / Type B1), this protein is Cysteine--tRNA ligase.